Here is a 428-residue protein sequence, read N- to C-terminus: Light-independent protochlorophyllide reductase subunit N (428 aa).

Residues Cys29, Cys54, and Cys115 each coordinate [4Fe-4S] cluster.

It belongs to the BchN/ChlN family. In terms of assembly, protochlorophyllide reductase is composed of three subunits; BchL, BchN and BchB. Forms a heterotetramer of two BchB and two BchN subunits. The cofactor is [4Fe-4S] cluster.

The catalysed reaction is chlorophyllide a + oxidized 2[4Fe-4S]-[ferredoxin] + 2 ADP + 2 phosphate = protochlorophyllide a + reduced 2[4Fe-4S]-[ferredoxin] + 2 ATP + 2 H2O. Its pathway is porphyrin-containing compound metabolism; bacteriochlorophyll biosynthesis (light-independent). In terms of biological role, component of the dark-operative protochlorophyllide reductase (DPOR) that uses Mg-ATP and reduced ferredoxin to reduce ring D of protochlorophyllide (Pchlide) to form chlorophyllide a (Chlide). This reaction is light-independent. The NB-protein (BchN-BchB) is the catalytic component of the complex. The polypeptide is Light-independent protochlorophyllide reductase subunit N (Cereibacter sphaeroides (strain ATCC 17023 / DSM 158 / JCM 6121 / CCUG 31486 / LMG 2827 / NBRC 12203 / NCIMB 8253 / ATH 2.4.1.) (Rhodobacter sphaeroides)).